Reading from the N-terminus, the 455-residue chain is Probable Xaa-Pro aminopeptidase GSTUM_00008071001 (455 aa).

Mn(2+)-binding residues include Asp251, Asp262, Glu386, and Glu426.

Belongs to the peptidase M24B family. Mn(2+) is required as a cofactor.

The catalysed reaction is Release of any N-terminal amino acid, including proline, that is linked to proline, even from a dipeptide or tripeptide.. Functionally, catalyzes the removal of a penultimate prolyl residue from the N-termini of peptides. In Tuber melanosporum (strain Mel28) (Perigord black truffle), this protein is Probable Xaa-Pro aminopeptidase GSTUM_00008071001.